Consider the following 610-residue polypeptide: Phosphomethylpyrimidine synthase (610 aa).

Substrate contacts are provided by residues Asn216, Met245, Tyr274, His310, Ser330 to Gly332, Asp371 to Arg374, and Glu410. His414 contacts Zn(2+). Tyr437 contributes to the substrate binding site. His478 contacts Zn(2+). Positions 558, 561, and 566 each coordinate [4Fe-4S] cluster.

It belongs to the ThiC family. Homodimer. [4Fe-4S] cluster is required as a cofactor.

It carries out the reaction 5-amino-1-(5-phospho-beta-D-ribosyl)imidazole + S-adenosyl-L-methionine = 4-amino-2-methyl-5-(phosphooxymethyl)pyrimidine + CO + 5'-deoxyadenosine + formate + L-methionine + 3 H(+). Its pathway is cofactor biosynthesis; thiamine diphosphate biosynthesis. In terms of biological role, catalyzes the synthesis of the hydroxymethylpyrimidine phosphate (HMP-P) moiety of thiamine from aminoimidazole ribotide (AIR) in a radical S-adenosyl-L-methionine (SAM)-dependent reaction. This Rhizobium etli (strain ATCC 51251 / DSM 11541 / JCM 21823 / NBRC 15573 / CFN 42) protein is Phosphomethylpyrimidine synthase.